The following is a 47-amino-acid chain: Zinc-finger protein TK0143 (47 aa).

The C2H2-type zinc-finger motif lies at 18–41 (FRCPRCGMVFRSAKAYTRHVNKAH). Residues cysteine 20, cysteine 23, histidine 36, and histidine 41 each coordinate Zn(2+).

In terms of assembly, crystallized in association with 70S ribosomes. It depends on Zn(2+) as a cofactor.

This is Zinc-finger protein TK0143 from Thermococcus kodakarensis (strain ATCC BAA-918 / JCM 12380 / KOD1) (Pyrococcus kodakaraensis (strain KOD1)).